The chain runs to 420 residues: tRNA(Ile)-lysidine synthase (420 aa).

Residue 28-33 (SGGLDS) coordinates ATP.

Belongs to the tRNA(Ile)-lysidine synthase family.

It is found in the cytoplasm. The catalysed reaction is cytidine(34) in tRNA(Ile2) + L-lysine + ATP = lysidine(34) in tRNA(Ile2) + AMP + diphosphate + H(+). Ligates lysine onto the cytidine present at position 34 of the AUA codon-specific tRNA(Ile) that contains the anticodon CAU, in an ATP-dependent manner. Cytidine is converted to lysidine, thus changing the amino acid specificity of the tRNA from methionine to isoleucine. This Hydrogenovibrio crunogenus (strain DSM 25203 / XCL-2) (Thiomicrospira crunogena) protein is tRNA(Ile)-lysidine synthase.